A 319-amino-acid chain; its full sequence is Ciliary microtubule inner protein 2A (319 aa).

The protein belongs to the CIMIP2 family. As to quaternary structure, microtubule inner protein component of sperm flagellar doublet microtubules.

It is found in the cytoplasm. The protein resides in the cytoskeleton. Its subcellular location is the flagellum axoneme. Its function is as follows. Microtubule inner protein (MIP) part of the dynein-decorated doublet microtubules (DMTs) in flagellum axoneme. Binds to the intra-tubulin interfaces. This chain is Ciliary microtubule inner protein 2A (Cimip2a), found in Mus musculus (Mouse).